We begin with the raw amino-acid sequence, 2753 residues long: Maltase-glucoamylase (2753 aa).

Topologically, residues 1–13 (MARKKLKKFTTLE) are cytoplasmic. Residues 14 to 34 (IVLSVLLLVLFIISIVLIVLL) form a helical; Signal-anchor for type II membrane protein membrane-spanning segment. At 35–2753 (AKESLKSTAP…FTSLTWISTL (2719 aa)) the chain is on the lumenal side. Residues 41–87 (STAPDPGTTGTPDPGTTGTPDPGTTGTTHARTTGPPDPGTTGTTPVS) form a disordered region. The segment covering 44 to 85 (PDPGTTGTPDPGTTGTPDPGTTGTTHARTTGPPDPGTTGTTP) has biased composition (low complexity). A P-type 1 domain is found at 88–134 (AECPVVNELERINCIPDQPPTKATCDQRGCCWNPQGAVSVPWCYYSK). 3 cysteine pairs are disulfide-bonded: Cys-90-Cys-118, Cys-101-Cys-117, and Cys-112-Cys-130. Asn-135 carries N-linked (GlcNAc...) asparagine glycosylation. Asp-289 provides a ligand contact to acarbose. Asn-295 carries N-linked (GlcNAc...) asparagine glycosylation. A maltase region spans residues 356–737 (PEQVVQEYLE…FRAHSRGDTV (382 aa)). Asp-413 lines the acarbose pocket. A sulfotyrosine mark is found at Tyr-416 and Tyr-425. 3 N-linked (GlcNAc...) asparagine glycosylation sites follow: Asn-457, Asn-458, and Asn-479. The active-site Nucleophile is the Asp-529. Glu-532 is an active-site residue. Arg-612 and Asp-628 together coordinate acarbose. Cys-659 and Cys-670 form a disulfide bridge. His-686 lines the acarbose pocket. 8 N-linked (GlcNAc...) asparagine glycosylation sites follow: Asn-707, Asn-749, Asn-827, Asn-885, Asn-912, Asn-977, Asn-989, and Asn-1255. One can recognise a P-type 2 domain in the interval 954–1000 (WSIKIRDEEKIDCYPDENGASAENCTARGCIWEASNSSGVPFCYFVN). 2 cysteine pairs are disulfide-bonded: Cys-966–Cys-983 and Cys-978–Cys-996. Residues 1221–1632 (TPELVTQQYT…MQKAHTEGVT (412 aa)) form a glucoamylase region. Tyr-1282 bears the Sulfotyrosine mark. Residues Asn-1323, Asn-1364, and Asn-1388 are each glycosylated (N-linked (GlcNAc...) asparagine). Residue Asp-1420 is the Nucleophile of the active site. Residue Glu-1423 is part of the active site. The active-site Proton donor is the Asp-1526. A P-type 3 domain is found at 1850-1896 (WSIKIRDEEKIDCYPDENGDSAENCTARGCIWEASNSSGVPFCYFVN). 2 disulfide bridges follow: Cys-1862-Cys-1879 and Cys-1874-Cys-1892. 4 N-linked (GlcNAc...) asparagine glycosylation sites follow: Asn-2499, Asn-2568, Asn-2738, and Asn-2743.

The protein belongs to the glycosyl hydrolase 31 family. Monomer. N- and O-glycosylated. Post-translationally, does not undergo intracellular or extracellular proteolytic cleavage. In terms of processing, sulfated. Broadly expressed. Highly expressed in small intestine. Expressed in granulocytes.

It localises to the apical cell membrane. The enzyme catalyses Hydrolysis of terminal, non-reducing (1-&gt;4)-linked alpha-D-glucose residues with release of alpha-D-glucose.. It catalyses the reaction D-maltoheptaose + H2O = D-maltohexaose + alpha-D-glucose. It carries out the reaction D-maltohexaose + H2O = D-maltopentaose + alpha-D-glucose. The catalysed reaction is D-maltopentaose + H2O = D-maltotetraose + alpha-D-glucose. The enzyme catalyses D-maltotetraose + H2O = D-maltotriose + alpha-D-glucose. It catalyses the reaction D-maltotriose + H2O = D-maltose + alpha-D-glucose. It carries out the reaction D-maltose + H2O = alpha-D-glucose + D-glucose. The catalysed reaction is nigerose + H2O = alpha-D-glucose + D-glucose. The enzyme catalyses kojibiose + H2O = alpha-D-glucose + D-glucose. It catalyses the reaction isomaltose + H2O = alpha-D-glucose + D-glucose. It carries out the reaction 6-O-alpha-D-glucopyranosyl-D-fructose + H2O = alpha-D-glucose + D-fructose. Its pathway is carbohydrate degradation. With respect to regulation, down-regulated at high oligomaltose concentration as it occurs during the mealtime. Down-regulated by anti-diabetic drug acarbose. In terms of biological role, alpha-(1,4) exo-glucosidase involved in breakdown of dietary starch oligosaccharides in small intestine. Cleaves the non-reducing alpha-(1,4)-linked glucose residue in linear dextrins with retention of anomeric center stereochemistry. Mainly hydrolyzes short length oligomaltoses having two to seven glucose residues. Can cleave alpha-(1,2), alpha-(1,3) and alpha-(1,6) glycosidic linkages with lower efficiency, whereas beta glycosidic linkages are usually not hydrolyzed. The polypeptide is Maltase-glucoamylase (Homo sapiens (Human)).